Consider the following 375-residue polypeptide: Tyrosine--tRNA ligase (375 aa).

L-tyrosine-binding residues include Tyr37, Tyr168, Gln172, Asp175, and Gln190. Positions 251-255 match the 'KMSKS' region motif; the sequence is KMSKS. Residue Lys254 participates in ATP binding.

This sequence belongs to the class-I aminoacyl-tRNA synthetase family. TyrS type 4 subfamily. In terms of assembly, homodimer.

It localises to the cytoplasm. The catalysed reaction is tRNA(Tyr) + L-tyrosine + ATP = L-tyrosyl-tRNA(Tyr) + AMP + diphosphate + H(+). In terms of biological role, catalyzes the attachment of tyrosine to tRNA(Tyr) in a two-step reaction: tyrosine is first activated by ATP to form Tyr-AMP and then transferred to the acceptor end of tRNA(Tyr). This Pyrococcus abyssi (strain GE5 / Orsay) protein is Tyrosine--tRNA ligase.